A 187-amino-acid polypeptide reads, in one-letter code: Peptide deformylase (187 aa).

Residues Cys94 and His136 each coordinate Fe cation. Glu137 is an active-site residue. Fe cation is bound at residue His140.

It belongs to the polypeptide deformylase family. It depends on Fe(2+) as a cofactor.

It catalyses the reaction N-terminal N-formyl-L-methionyl-[peptide] + H2O = N-terminal L-methionyl-[peptide] + formate. In terms of biological role, removes the formyl group from the N-terminal Met of newly synthesized proteins. Requires at least a dipeptide for an efficient rate of reaction. N-terminal L-methionine is a prerequisite for activity but the enzyme has broad specificity at other positions. The protein is Peptide deformylase of Chlorobaculum tepidum (strain ATCC 49652 / DSM 12025 / NBRC 103806 / TLS) (Chlorobium tepidum).